Here is a 166-residue protein sequence, read N- to C-terminus: Small ribosomal subunit protein uS5 (166 aa).

One can recognise an S5 DRBM domain in the interval 11-74 (LQEKLIAVNR…EKARRNMINV (64 aa)).

Belongs to the universal ribosomal protein uS5 family. In terms of assembly, part of the 30S ribosomal subunit. Contacts proteins S4 and S8.

With S4 and S12 plays an important role in translational accuracy. Functionally, located at the back of the 30S subunit body where it stabilizes the conformation of the head with respect to the body. This Cronobacter sakazakii (strain ATCC BAA-894) (Enterobacter sakazakii) protein is Small ribosomal subunit protein uS5.